A 229-amino-acid polypeptide reads, in one-letter code: Aquaporin Z (229 aa).

A run of 2 helical transmembrane segments spans residues 8–28 (FLGTFWLVLGGCGSAVLAAGF) and 33–53 (IGFAGVALAFGLTVVTMAYAI). The NPA 1 signature appears at 62–64 (NPA). A run of 3 helical transmembrane segments spans residues 88–108 (VLGAIAAGAVLYVIASGGAGF), 129–149 (LLAALVCEVVMTMFFLLVIMG), and 158–178 (GFAPLAIGLALTLIHLISIPV). The short motif at 184–186 (NPA) is the NPA 2 element. The chain crosses the membrane as a helical span at residues 192–212 (ALFVGGWAVQQLWLFWLAPII).

It belongs to the MIP/aquaporin (TC 1.A.8) family. In terms of assembly, homotetramer.

Its subcellular location is the cell inner membrane. The catalysed reaction is H2O(in) = H2O(out). In terms of biological role, channel that permits osmotically driven movement of water in both directions. It is involved in the osmoregulation and in the maintenance of cell turgor during volume expansion in rapidly growing cells. It mediates rapid entry or exit of water in response to abrupt changes in osmolarity. This chain is Aquaporin Z, found in Chromobacterium violaceum (strain ATCC 12472 / DSM 30191 / JCM 1249 / CCUG 213 / NBRC 12614 / NCIMB 9131 / NCTC 9757 / MK).